The chain runs to 4144 residues: DNA-dependent protein kinase catalytic subunit (4144 aa).

K127 is modified (N6-acetyllysine). Residues 298–333 form an HEAT 1 repeat; the sequence is DNYVSLFEVLSKWCSHTNVEMKKAAHSALESFLKQV. Phosphoserine occurs at positions 521, 851, and 903. One copy of the HEAT 2 repeat lies at 1014-1050; the sequence is QDTVALLETILDGIVDPVDSTLRDFCGRCIREFLKWS. The residue at position 1075 (S1075) is a Phosphoserine. K1219 is subject to N6-acetyllysine. Residues 1516 to 1551 form an interaction with C1D region; sequence LDPSCKRLASGLLELAFAFGGLCEHLVDLLLDTAVL. The tract at residues 1516–1551 is leucine-zipper; it reads LDPSCKRLASGLLELAFAFGGLCEHLVDLLLDTAVL. A TPR 1 repeat occupies 1736 to 1769; it reads PMKSEEFPVGTLRYSNYVDCMKKFLDALELSQSP. K1983 carries the N6-acetyllysine modification. A Phosphoserine; by autocatalysis modification is found at S2069. K2271 carries the N6-acetyllysine modification. The segment at 2448 to 3228 is KIP-binding; it reads LDIIYKMMAK…DHSLSMDEER (781 aa). At T2547 the chain carries Phosphothreonine. Residue T2621 is modified to Phosphothreonine; by autocatalysis. Residue S2624 is modified to Phosphoserine; by autocatalysis. A phosphothreonine; by autocatalysis mark is found at T2650 and T2659. Residues 2697–2729 form a disordered region; the sequence is AQKRNEKSQRAPLKSVGPDFGEKKLGLPGDKVD. A compositionally biased stretch (basic and acidic residues) spans 2716 to 2729; it reads FGEKKLGLPGDKVD. The interval 2753–2781 is may split the end of the DNA molecule, with the two strands separating around the region; the sequence is EKLSLIYARKGIAEQKREKEIKSELKMKH. Position 2805 is a phosphoserine (S2805). TPR repeat units follow at residues 2903-2935, 2936-2964, and 2965-2998; these read PVGVRLLEEALLHLGPQEPPAKQFKGRMRVSPD, VVRWMELAKLYRSIGEYDILRGIFSSEIG, and TKQITQSAIFAEARSDYSEAAKQYNEALNKEEWV. Residues 2922–3555 enclose the FAT domain; the sequence is PAKQFKGRMR…VYPFIISSES (634 aa). S3221 bears the Phosphoserine mark. Residues K3257, K3276, K3654, and K3658 each carry the N6-acetyllysine modification. Residues 3711–3748 form a TPR 5 repeat; the sequence is LRNELEIPGQYDGKGKPLPEYHARIAGFDERIKVMASI. A PI3K/PI4K catalytic domain is found at 3738-4069; that stretch reads FDERIKVMAS…IHYAKRKLAG (332 aa). A G-loop region spans residues 3744–3750; that stretch reads VMASIRK. Phosphoserine is present on residues S3747 and S3837. Positions 3935–3943 are catalytic loop; that stretch reads GIGDRHLNN. The segment at 3955 to 3980 is activation loop; that stretch reads GIDFGHAFGSATQFLPVPELMPFRLT. Position 4042 is a phosphoserine (S4042). In terms of domain architecture, FATC spans 4112 to 4144; sequence NGLSEEAQVKCLIDQATDPNILGRTWIGWEPWM.

It belongs to the PI3/PI4-kinase family. In terms of assembly, DNA-PK is a heterotrimer of PRKDC and the Ku dimer (composed of XRCC6/Ku70 and XRCC5/Ku86). Formation of this complex may be promoted by interaction with ILF3. Component of the core long-range non-homologous end joining (NHEJ) complex (also named DNA-PK complex) composed of PRKDC, LIG4, XRCC4, XRCC6/Ku70, XRCC5/Ku86 and NHEJ1/XLF. Additional component of the NHEJ complex includes PAXX. Following autophosphorylation, PRKDC dissociates from DNA. Interacts with DNA-PKcs-interacting protein (KIP) with the region upstream the kinase domain. PRKDC alone also interacts with and phosphorylates DCLRE1C, thereby activating the latent endonuclease activity of this protein. Interacts with C1D. Interacts with TTI1 and TELO2. Interacts with CIB1. Interacts with SETX. Interacts with NR4A3; the DNA-dependent protein kinase complex DNA-PK phosphorylates and activates NR4A3 and prevents NR4A3 ubiquitination and degradation. Interacts with BRAT1. Part of the HDP-RNP complex composed of at least HEXIM1, PRKDC, XRCC5, XRCC6, paraspeckle proteins (SFPQ, NONO, PSPC1, RBM14, and MATR3) and NEAT1 RNA. Interacts with KAT5. Autophosphorylated at two clusters, the T2609 cluster and the S2056 cluster. Autophosphorylated on Ser-2069, Thr-2621, Thr-2650 and Thr-2659. Ser-2069 and Thr-2621 are DNA damage-inducible phosphorylation sites (inducible with ionizing radiation, IR) dephosphorylated by PPP5C. Autophosphorylation induces a conformational change that leads to remodeling of the DNA-PK complex, requisite for efficient end processing and DNA repair. Autophosphorylation in trans within DNA-PK complexes loaded on DNA ends leads to the dissociation of PRKDC from DNA and the transition into the short-range NHEJ complex. Autophosphorylation of the T2609 cluster is required for hematopoietic development and protein synthesis in erythrocytes precursors. In terms of processing, S-nitrosylated by GAPDH. Post-translationally, polyubiquitinated by RNF144A, leading to proteasomal degradation.

Its subcellular location is the nucleus. It is found in the nucleolus. The protein resides in the cytoplasm. The protein localises to the cytosol. It carries out the reaction L-seryl-[protein] + ATP = O-phospho-L-seryl-[protein] + ADP + H(+). It catalyses the reaction L-threonyl-[protein] + ATP = O-phospho-L-threonyl-[protein] + ADP + H(+). Activity seems to be attenuated by autophosphorylation. Binding to the SL1 region of U3 small nucleolar RNA promotes auto-phosphorylation activity. Inhibited by wortmannin. In terms of biological role, serine/threonine-protein kinase that acts as a molecular sensor for DNA damage. Involved in DNA non-homologous end joining (NHEJ) required for double-strand break (DSB) repair and V(D)J recombination. Must be bound to DNA to express its catalytic properties. Promotes processing of hairpin DNA structures in V(D)J recombination by activation of the hairpin endonuclease artemis (DCLRE1C). Recruited by XRCC5 and XRCC6 to DNA ends and is required to (1) protect and align broken ends of DNA, thereby preventing their degradation, (2) and sequester the DSB for repair by NHEJ. Acts as a scaffold protein to aid the localization of DNA repair proteins to the site of damage. The assembly of the DNA-PK complex at DNA ends is also required for the NHEJ ligation step. Found at the ends of chromosomes, suggesting a further role in the maintenance of telomeric stability and the prevention of chromosomal end fusion. Also involved in modulation of transcription. As part of the DNA-PK complex, involved in the early steps of ribosome assembly by promoting the processing of precursor rRNA into mature 18S rRNA in the small-subunit processome. Binding to U3 small nucleolar RNA, recruits PRKDC and XRCC5/Ku86 to the small-subunit processome. Recognizes the substrate consensus sequence [ST]-Q. Phosphorylates 'Ser-139' of histone variant H2AX, thereby regulating DNA damage response mechanism. Phosphorylates ASF1A, DCLRE1C, c-Abl/ABL1, histone H1, HSPCA, c-jun/JUN, p53/TP53, PARP1, POU2F1, DHX9, FH, SRF, NHEJ1/XLF, XRCC1, XRCC4, XRCC5, XRCC6, WRN, MYC and RFA2. Can phosphorylate C1D not only in the presence of linear DNA but also in the presence of supercoiled DNA. Ability to phosphorylate p53/TP53 in the presence of supercoiled DNA is dependent on C1D. Acts as a regulator of the phosphatidylinositol 3-kinase/protein kinase B signal transduction by mediating phosphorylation of 'Ser-473' of protein kinase B (PKB/AKT1, PKB/AKT2, PKB/AKT3), promoting their activation. Contributes to the determination of the circadian period length by antagonizing phosphorylation of CRY1 'Ser-588' and increasing CRY1 protein stability, most likely through an indirect mechanism. Plays a role in the regulation of DNA virus-mediated innate immune response by assembling into the HDP-RNP complex, a complex that serves as a platform for IRF3 phosphorylation and subsequent innate immune response activation through the cGAS-STING pathway. Also regulates the cGAS-STING pathway by catalyzing phosphorylation of CGAS, thereby impairing CGAS oligomerization and activation. Also regulates the cGAS-STING pathway by mediating phosphorylation of PARP1. The protein is DNA-dependent protein kinase catalytic subunit (PRKDC) of Canis lupus familiaris (Dog).